Consider the following 519-residue polypeptide: Serine/threonine-protein kinase RIO3 (519 aa).

Ser-8 and Ser-112 each carry phosphoserine. At Tyr-122 the chain carries Phosphotyrosine. The disordered stretch occupies residues 122–159 (YEDSDSSEDEVDWQDTRDDPYRPAKPIPTPKKGFIGKG). A compositionally biased stretch (acidic residues) spans 124-134 (DSDSSEDEVDW). Phosphoserine occurs at positions 125, 127, and 128. One can recognise a Protein kinase domain in the interval 251–519 (ETITGCISTG…DGGPPILYDE (269 aa)). Residues 257 to 265 (ISTGKESVV) and Lys-290 contribute to the ATP site. The active-site Proton acceptor is the Asp-406.

It belongs to the protein kinase superfamily. RIO-type Ser/Thr kinase family. In terms of assembly, interacts with CASP10. Interacts with IRF3; RIOK3 probably mediates the interaction of TBK1 with IRF3. Associated with 40S pre-ribosomal particles. Mg(2+) serves as cofactor. Autophosphorylated (in vitro).

The protein localises to the cytoplasm. The enzyme catalyses L-seryl-[protein] + ATP = O-phospho-L-seryl-[protein] + ADP + H(+). It carries out the reaction L-threonyl-[protein] + ATP = O-phospho-L-threonyl-[protein] + ADP + H(+). In terms of biological role, involved in regulation of type I interferon (IFN)-dependent immune response which plays a critical role in the innate immune response against DNA and RNA viruses. May act as an adapter protein essential for the recruitment of TBK1 to IRF3. Phosphorylates IFIH1 within the C-terminal region interfering with IFIH1 filament assembly on long dsRNA and resulting in attenuated IFIH1-signaling. Can inhibit CASP10 isoform 7-mediated activation of the NF-kappaB signaling pathway. May play a role in the biogenesis of the 40S ribosomal subunit. Involved in the processing of 21S pre-rRNA to the mature 18S rRNA. The protein is Serine/threonine-protein kinase RIO3 (RIOK3) of Bos taurus (Bovine).